Consider the following 169-residue polypeptide: Ribosome maturation factor RimP (169 aa).

The protein belongs to the RimP family.

It localises to the cytoplasm. Its function is as follows. Required for maturation of 30S ribosomal subunits. The chain is Ribosome maturation factor RimP from Coprothermobacter proteolyticus (strain ATCC 35245 / DSM 5265 / OCM 4 / BT).